A 393-amino-acid chain; its full sequence is ATP phosphoribosyltransferase regulatory subunit (393 aa).

The protein belongs to the class-II aminoacyl-tRNA synthetase family. HisZ subfamily. Heteromultimer composed of HisG and HisZ subunits.

The protein localises to the cytoplasm. Its pathway is amino-acid biosynthesis; L-histidine biosynthesis; L-histidine from 5-phospho-alpha-D-ribose 1-diphosphate: step 1/9. Required for the first step of histidine biosynthesis. May allow the feedback regulation of ATP phosphoribosyltransferase activity by histidine. The sequence is that of ATP phosphoribosyltransferase regulatory subunit from Shouchella clausii (strain KSM-K16) (Alkalihalobacillus clausii).